Here is a 107-residue protein sequence, read N- to C-terminus: DNA-directed RNA polymerase subunit omega (107 aa).

The protein belongs to the RNA polymerase subunit omega family. In terms of assembly, the RNAP catalytic core consists of 2 alpha, 1 beta, 1 beta' and 1 omega subunit. When a sigma factor is associated with the core the holoenzyme is formed, which can initiate transcription.

The enzyme catalyses RNA(n) + a ribonucleoside 5'-triphosphate = RNA(n+1) + diphosphate. Promotes RNA polymerase assembly. Latches the N- and C-terminal regions of the beta' subunit thereby facilitating its interaction with the beta and alpha subunits. The sequence is that of DNA-directed RNA polymerase subunit omega from Oenococcus oeni (strain ATCC BAA-331 / PSU-1).